We begin with the raw amino-acid sequence, 61 residues long: Small ribosomal subunit protein uS14 (61 aa).

Residues Cys24, Cys27, Cys40, and Cys43 each coordinate Zn(2+).

The protein belongs to the universal ribosomal protein uS14 family. Zinc-binding uS14 subfamily. As to quaternary structure, part of the 30S ribosomal subunit. Contacts proteins S3 and S10. Requires Zn(2+) as cofactor.

Functionally, binds 16S rRNA, required for the assembly of 30S particles and may also be responsible for determining the conformation of the 16S rRNA at the A site. This chain is Small ribosomal subunit protein uS14, found in Desulfotalea psychrophila (strain LSv54 / DSM 12343).